Consider the following 274-residue polypeptide: Exosome complex component RRP40 (274 aa).

Residue Ala2 is modified to N-acetylalanine. Lys150 participates in a covalent cross-link: Glycyl lysine isopeptide (Lys-Gly) (interchain with G-Cter in SUMO2).

Belongs to the RRP40 family. Component of the RNA exosome core complex (Exo-9), composed of EXOSC1, EXOSC2, EXOSC3, EXOSC4, EXOSC5, EXOSC6, EXOSC7, EXOSC8 and EXOSC9; within the complex interacts with EXOSC5 and EXOSC9. The catalytically inactive RNA exosome core complex (Exo-9) associates with the catalytic subunit EXOSC10/RRP6. Exo-9 may associate with DIS3 to form the nucleolar exosome complex, or DIS3L to form the cytoplasmic exosome complex. Exo-9 is formed by a hexameric base ring consisting of the heterodimers EXOSC4-EXOSC9, EXOSC5-EXOSC8 and EXOSC6-EXOSC7, and a cap ring consisting of EXOSC1, EXOSC2 and EXOSC3. The RNA exosome complex associates with cofactors C1D/RRP47, MPHOSPH6/MPP6 and MTREX/MTR4. Interacts with MPHOSPH6/MPP6; the interaction is direct. Interacts with GTPBP1. Interacts with ZC3HAV1. Interacts with DDX17 only in the presence of ZC3HAV1 in an RNA-independent manner. Interacts with DHX36; this interaction occurs in a RNase-insensitive manner. Interacts with HBS1L isoform 2.

It localises to the cytoplasm. The protein localises to the nucleus. The protein resides in the nucleolus. Functionally, non-catalytic component of the RNA exosome complex which has 3'-&gt;5' exoribonuclease activity and participates in a multitude of cellular RNA processing and degradation events. In the nucleus, the RNA exosome complex is involved in proper maturation of stable RNA species such as rRNA, snRNA and snoRNA, in the elimination of RNA processing by-products and non-coding 'pervasive' transcripts, such as antisense RNA species and promoter-upstream transcripts (PROMPTs), and of mRNAs with processing defects, thereby limiting or excluding their export to the cytoplasm. The RNA exosome may be involved in Ig class switch recombination (CSR) and/or Ig variable region somatic hypermutation (SHM) by targeting AICDA deamination activity to transcribed dsDNA substrates. In the cytoplasm, the RNA exosome complex is involved in general mRNA turnover and specifically degrades inherently unstable mRNAs containing AU-rich elements (AREs) within their 3' untranslated regions, and in RNA surveillance pathways, preventing translation of aberrant mRNAs. It seems to be involved in degradation of histone mRNA. The catalytic inactive RNA exosome core complex of 9 subunits (Exo-9) is proposed to play a pivotal role in the binding and presentation of RNA for ribonucleolysis, and to serve as a scaffold for the association with catalytic subunits and accessory proteins or complexes. EXOSC3 as peripheral part of the Exo-9 complex stabilizes the hexameric ring of RNase PH-domain subunits through contacts with EXOSC9 and EXOSC5. In Mus musculus (Mouse), this protein is Exosome complex component RRP40 (Exosc3).